We begin with the raw amino-acid sequence, 366 residues long: Inactive protein RESTRICTED TEV MOVEMENT 2 (366 aa).

One can recognise a sHSP domain in the interval 14–121; it reads VQYEDFVPKS…LPETSRTEAA (108 aa). Residues 129 to 133 form an A-1 repeat; the sequence is LEEKR. A 6 X 5 AA repeats A of L-E-E-[SKR]-[ERK] region spans residues 129-220; that stretch reads LEEKRLLEES…LEERRLEERK (92 aa). The A-2 repeat unit spans residues 135 to 139; sequence LEESR. Residues 156-160 form an A-3 repeat; it reads LEEKE. The B-1 repeat unit spans residues 163–176; that stretch reads IRKLQEEAKAKEEA. Residues 163–206 are 3 X 14 AA repeats B of [IMA]-[RK]-K-L-Q-E-E-A-K-A-K-E-[EK]-[LA]; that stretch reads IRKLQEEAKAKEEAEMRKLQEEAKANEEAAAKKLQEEIEAKEKL. A B-2 repeat occupies 178 to 191; it reads MRKLQEEAKANEEA. A B-3 repeat occupies 193-205; sequence AKKLQEEIEAKEK. The A-4 repeat unit spans residues 206–210; that stretch reads LEERK. The stretch at 211–215 is one A-5 repeat; sequence LEERR. An A-6 repeat occupies 216–220; sequence LEERK. A helical membrane pass occupies residues 322-342; that stretch reads LMMNVGVAALVIFALGAYVSY. The disordered stretch occupies residues 345–366; it reads CSSSSSSSSSSPSSSSSSTKPE. Residues 346-366 are compositionally biased toward low complexity; sequence SSSSSSSSSSPSSSSSSTKPE.

The protein belongs to the small heat shock protein (HSP20) family.

The protein localises to the cell membrane. In terms of biological role, seems to not be involved in heat resistance. Unable to mediate restriction of long-distance movement of the pathogenic tobacco etch virus (TEV) without causing a hypersensitive response or inducing systemic acquired resistance. In Arabidopsis thaliana (Mouse-ear cress), this protein is Inactive protein RESTRICTED TEV MOVEMENT 2 (RTM2).